A 691-amino-acid polypeptide reads, in one-letter code: Cyclic nucleotide-gated channel alpha-1 (691 aa).

Over 1 to 168 (MKKNIINTWY…PAGNMYYNWL (168 aa)) the chain is Cytoplasmic. Positions 31–151 (ENGARSSFSD…KGKDKKEEEK (121 aa)) are disordered. The segment covering 39-56 (SDDDGDDDSASMFEESEN) has biased composition (acidic residues). Composition is skewed to basic and acidic residues over residues 57–76 (ETPH…DPSQ) and 112–151 (SKSG…EEEK). Residues 169-190 (FCITLPVMYNWTMVIARACFDE) form a helical membrane-spanning segment. At 191–200 (LQSDYLEYWI) the chain is on the extracellular side. Residues 201–221 (IFDYLSDIVYLLDMFVRTRTG) form a helical membrane-spanning segment. The Cytoplasmic portion of the chain corresponds to 222-246 (YLEQGLLVREEAKLIEKYKSNLQFK). A helical membrane pass occupies residues 247-265 (LDFLSVIPTDLLYFKLGWN). The Extracellular segment spans residues 266-270 (YPEIR). A helical membrane pass occupies residues 271 to 289 (LNRLLRISRMFEFFQRTET). The Cytoplasmic portion of the chain corresponds to 290–296 (RTNYPNI). Positions 294-402 (PNIFRISNLV…GNIGSMISNM (109 aa)) are ion conduction pathway. A helical membrane pass occupies residues 297 to 320 (FRISNLVMYIVIIIHWNACVYFSI). At 321–343 (SKAIGFGNDTWVYPDVNDPEFGR) the chain is on the extracellular side. The N-linked (GlcNAc...) asparagine glycan is linked to Asn328. A run of 2 helical transmembrane segments spans residues 344–378 (LARK…VFVV) and 379–403 (VDFL…SNMN). The interval 361 to 364 (TIGE) is selectivity filter. Residues 404-480 (AARAEFQARI…DTLKKVRIFA (77 aa)) are C-linker. At 404–691 (AARAEFQARI…ESRPLDSTQD (288 aa)) the chain is on the cytoplasmic side. The interval 484–604 (AGLLVELVLK…EEKGKQILMK (121 aa)) is cyclic nucleotide-binding domain. 3',5'-cyclic GMP is bound by residues Gly544, Ser547, Arg560, and Thr561. Residues Arg560 and Thr561 each contribute to the 3',5'-cyclic AMP site. The stretch at 622-676 (LEEKVTRMEGSVDLLQTRFARILAEYESMQQKLKQRLTKVERFLKPIIDTEFSAL) forms a coiled coil.

This sequence belongs to the cyclic nucleotide-gated cation channel (TC 1.A.1.5) family. CNGA1 subfamily. As to quaternary structure, forms heterotetrameric channels composed of CNGA1 and CNGB1 subunits with 3:1 stoichiometry. May also form cyclic nucleotide-activated homotetrameric channels, that are efficiently activated by saturating cGMP, but poorly activated by saturating cAMP compared to the heterotetramer with CNGB1. The channel binds Ca(2+)-bound CALM1 via CaM1 and CaM2 regions of the CNGB1 subunit; this interaction modulates the affinity of the channel for cNMPs in response to intracellular Ca(2+) levels.

The protein localises to the cell membrane. The enzyme catalyses Ca(2+)(in) = Ca(2+)(out). It catalyses the reaction Na(+)(in) = Na(+)(out). The catalysed reaction is K(+)(in) = K(+)(out). It carries out the reaction NH4(+)(in) = NH4(+)(out). The enzyme catalyses Rb(+)(in) = Rb(+)(out). It catalyses the reaction Li(+)(in) = Li(+)(out). The catalysed reaction is Cs(+)(in) = Cs(+)(out). Functionally, pore-forming subunit of the rod cyclic nucleotide-gated channel. Mediates rod photoresponses at dim light converting transient changes in intracellular cGMP levels into electrical signals. In the dark, cGMP levels are high and keep the channel open enabling a steady inward current carried by Na(+) and Ca(2+) ions that leads to membrane depolarization and neurotransmitter release from synaptic terminals. Upon photon absorption cGMP levels decline leading to channel closure and membrane hyperpolarization that ultimately slows neurotransmitter release and signals the presence of light, the end point of the phototransduction cascade. Conducts cGMP- and cAMP-gated ion currents, with permeability for monovalent and divalent cations. The selectivity for Ca(2+) over Na(+) increases with cGMP concentrations, whereas the selectivity among monovalent ions is independent of the cGMP levels. This is Cyclic nucleotide-gated channel alpha-1 from Canis lupus familiaris (Dog).